Consider the following 305-residue polypeptide: Probable aspartoacylase (305 aa).

The Zn(2+) site is built by histidine 13 and glutamate 16. Residues arginine 55 and 62 to 63 (NR) contribute to the substrate site. Histidine 105 contacts Zn(2+). Substrate contacts are provided by glutamate 163 and tyrosine 273.

The protein belongs to the AspA/AstE family. Aspartoacylase subfamily. It depends on Zn(2+) as a cofactor.

The enzyme catalyses an N-acyl-L-aspartate + H2O = a carboxylate + L-aspartate. The polypeptide is Probable aspartoacylase (Prochlorococcus marinus (strain NATL2A)).